Consider the following 576-residue polypeptide: 5'-nucleotidase (576 aa).

The signal sequence occupies residues 1 to 28; the sequence is MRPAAATAPKWLLLALSALLPLWPTAKS. 2 residues coordinate Zn(2+): Asp-38 and His-40. Cys-53 and Cys-59 are oxidised to a cystine. Asn-55 carries an N-linked (GlcNAc...) asparagine glycan. Zn(2+)-binding residues include Asp-87, Asn-119, His-222, and His-245. N-linked (GlcNAc...) asparagine glycans are attached at residues Asn-313, Asn-335, and Asn-349. Intrachain disulfides connect Cys-355–Cys-360 and Cys-367–Cys-389. Residue Arg-356 coordinates AMP. An IMP-binding site is contributed by Arg-356. Residues Asn-392 and Arg-397 each coordinate AMP. Residues Asn-392 and Arg-397 each coordinate IMP. Asn-405 is a glycosylation site (N-linked (GlcNAc...) asparagine). Residue Phe-419 coordinates AMP. Phe-419 is a binding site for IMP. Cys-478 and Cys-481 are oxidised to a cystine. Positions 502 and 508 each coordinate AMP. IMP is bound by residues Tyr-502 and Asp-508. The GPI-anchor amidated serine moiety is linked to residue Ser-551. The propeptide at 552-576 is removed in mature form; that stretch reads AASHYQGSFPLIILSFWAVILVLYQ.

It belongs to the 5'-nucleotidase family. Homodimer. Zn(2+) serves as cofactor. Expressed in the brain.

The protein localises to the cell membrane. It carries out the reaction a ribonucleoside 5'-phosphate + H2O = a ribonucleoside + phosphate. The catalysed reaction is a 2'-deoxyribonucleoside 5'-phosphate + H2O = a 2'-deoxyribonucleoside + phosphate. The enzyme catalyses dTMP + H2O = thymidine + phosphate. It catalyses the reaction CMP + H2O = cytidine + phosphate. It carries out the reaction IMP + H2O = inosine + phosphate. The catalysed reaction is AMP + H2O = adenosine + phosphate. The enzyme catalyses GMP + H2O = guanosine + phosphate. It catalyses the reaction UMP + H2O = uridine + phosphate. It carries out the reaction dAMP + H2O = 2'-deoxyadenosine + phosphate. The catalysed reaction is dCMP + H2O = 2'-deoxycytidine + phosphate. Catalyzes the hydrolysis of nucleotide monophosphates, releasing inorganic phosphate and the corresponding nucleoside. AMP is the preferred substrate but can also hydrolyze CMP and GMP. Shows a preference for ribonucleotide monophosphates over their equivalent deoxyribose forms. Other substrates include IMP, UMP, dAMP, dCMP, dTMP, NAD and NMN. The chain is 5'-nucleotidase (Nt5e) from Rattus norvegicus (Rat).